We begin with the raw amino-acid sequence, 83 residues long: Small ribosomal subunit protein uS17 (83 aa).

It belongs to the universal ribosomal protein uS17 family. As to quaternary structure, part of the 30S ribosomal subunit.

One of the primary rRNA binding proteins, it binds specifically to the 5'-end of 16S ribosomal RNA. This is Small ribosomal subunit protein uS17 from Gloeobacter violaceus (strain ATCC 29082 / PCC 7421).